The primary structure comprises 325 residues: D-alanine--D-alanine ligase (325 aa).

Positions 121–316 (KYVFEGCGLP…FEELVVRILR (196 aa)) constitute an ATP-grasp domain. ATP is bound at residue 147 to 202 (VAALGTPLSVKPAHEGSSIGIRKVNSAAELAEAYEAAARLDDLVLVEQWIEGPEFT). Mg(2+) is bound by residues Asp270, Glu283, and Asn285.

It belongs to the D-alanine--D-alanine ligase family. The cofactor is Mg(2+). It depends on Mn(2+) as a cofactor.

It is found in the cytoplasm. It catalyses the reaction 2 D-alanine + ATP = D-alanyl-D-alanine + ADP + phosphate + H(+). Its pathway is cell wall biogenesis; peptidoglycan biosynthesis. Functionally, cell wall formation. This chain is D-alanine--D-alanine ligase, found in Marinobacter nauticus (strain ATCC 700491 / DSM 11845 / VT8) (Marinobacter aquaeolei).